A 334-amino-acid chain; its full sequence is Formamidase (334 aa).

Positions 14 to 260 constitute a CN hydrolase domain; the sequence is FLVAAIQFPV…WEIVTGEIYP (247 aa). The Proton acceptor role is filled by Glu60. Residue Lys133 is the Proton donor of the active site. Residue Cys166 is the Nucleophile of the active site.

The protein belongs to the carbon-nitrogen hydrolase superfamily. Aliphatic amidase family. As to quaternary structure, homotetramer.

The catalysed reaction is formamide + H2O = formate + NH4(+). Its activity is regulated as follows. Inhibited by iodoacetate. Appears to be regulated by the fur protein, but this effect is not mediated at the transcriptional level. Its function is as follows. Is an aliphatic amidase with a restricted substrate specificity, as it only hydrolyzes formamide. Probably involved in the nitrogen metabolism of H.pylori. The polypeptide is Formamidase (amiF) (Helicobacter pylori (strain ATCC 700392 / 26695) (Campylobacter pylori)).